Consider the following 44-residue polypeptide: MRDIKTYLSVAPVLSTLWFGALAGLLIEINRLFPDALSFPFFSF.

Residues 7 to 27 (YLSVAPVLSTLWFGALAGLLI) form a helical membrane-spanning segment.

The protein belongs to the PsaJ family.

The protein resides in the plastid. It localises to the chloroplast thylakoid membrane. Functionally, may help in the organization of the PsaE and PsaF subunits. In Oryza nivara (Indian wild rice), this protein is Photosystem I reaction center subunit IX.